A 278-amino-acid chain; its full sequence is Ribosomal RNA small subunit methyltransferase A (278 aa).

S-adenosyl-L-methionine is bound by residues Asn18, Leu20, Gly45, Glu66, Asp89, and Asn110.

Belongs to the class I-like SAM-binding methyltransferase superfamily. rRNA adenine N(6)-methyltransferase family. RsmA subfamily.

The protein localises to the cytoplasm. It carries out the reaction adenosine(1518)/adenosine(1519) in 16S rRNA + 4 S-adenosyl-L-methionine = N(6)-dimethyladenosine(1518)/N(6)-dimethyladenosine(1519) in 16S rRNA + 4 S-adenosyl-L-homocysteine + 4 H(+). In terms of biological role, specifically dimethylates two adjacent adenosines (A1518 and A1519) in the loop of a conserved hairpin near the 3'-end of 16S rRNA in the 30S particle. May play a critical role in biogenesis of 30S subunits. The chain is Ribosomal RNA small subunit methyltransferase A from Cupriavidus metallidurans (strain ATCC 43123 / DSM 2839 / NBRC 102507 / CH34) (Ralstonia metallidurans).